The sequence spans 351 residues: MDYKSGLIPDGNAMENLEKQLICPICLEMFTKPVVILPCQHNLCRKCANDIFQAANPYWTNRGGSVSMSGGRFRCPSCRHEVIMDRHGVYGLQRNLLVENIIDIYKQECSSRPLQKGSHPMCKEHEDEKINIYCLTCEVPTCSLCKVFGAHQACEVAPLQSIFQGQKTELSNCISMLVAGNDRVQTIISQLEDSCRVTKENSHQVKEELSHKFDALYAILDEKKSELLQRITQEQEEKLDFIEALILQYREQLEKSTKLVETAIQSLDEPGGATFLLSAKPLIKSIVEASKGCQLGKTEQGFENMDYFTLNLEHIAEALRAIDFGTDEEEEFTEEEEEEDQEEGVSTEGHQ.

An RING-type zinc finger spans residues 23-79 (CPICLEMFTKPVVILPCQHNLCRKCANDIFQAANPYWTNRGGSVSMSGGRFRCPSCR). Residues 74-218 (RCPSCRHEVI…LSHKFDALYA (145 aa)) form an interaction with TTN region. The B box-type zinc-finger motif lies at 117–159 (GSHPMCKEHEDEKINIYCLTCEVPTCSLCKVFGAHQACEVAPL). Residues Cys122, His125, Cys145, and His151 each coordinate Zn(2+). Residues 189–269 (SQLEDSCRVT…VETAIQSLDE (81 aa)) adopt a coiled-coil conformation. The region spanning 267 to 325 (LDEPGGATFLLSAKPLIKSIVEASKGCQLGKTEQGFENMDYFTLNLEHIAEALRAIDFG) is the COS domain. Residues 326–345 (TDEEEEFTEEEEEEDQEEGV) show a composition bias toward acidic residues. The disordered stretch occupies residues 326 to 351 (TDEEEEFTEEEEEEDQEEGVSTEGHQ).

Homodimer. Homooligomer and heterooligomer. Interacts with SUMO2, titin/TTN and GMEB1. Interacts with TRIM54 and probably with TRIM55 and TNNI3. Forms a ternary complex with RACK1 and PRKCE. Interacts with CKM. As to expression, muscle specific. Selectively expressed in heart and skeletal muscle.

It is found in the cytoplasm. It localises to the nucleus. The protein resides in the myofibril. Its subcellular location is the sarcomere. The protein localises to the m line. It is found in the z line. The catalysed reaction is S-ubiquitinyl-[E2 ubiquitin-conjugating enzyme]-L-cysteine + [acceptor protein]-L-lysine = [E2 ubiquitin-conjugating enzyme]-L-cysteine + N(6)-ubiquitinyl-[acceptor protein]-L-lysine.. It participates in protein modification; protein ubiquitination. Functionally, E3 ubiquitin ligase. Mediates the ubiquitination and subsequent proteasomal degradation of CKM, GMEB1 and HIBADH. Regulates the proteasomal degradation of muscle proteins under amino acid starvation, where muscle protein is catabolized to provide other organs with amino acids. Inhibits de novo skeletal muscle protein synthesis under amino acid starvation. Regulates proteasomal degradation of cardiac troponin I/TNNI3 and probably of other sarcomeric-associated proteins. May play a role in striated muscle atrophy and hypertrophy by regulating an anti-hypertrophic PKC-mediated signaling pathway. May regulate the organization of myofibrils through TTN in muscle cells. The polypeptide is E3 ubiquitin-protein ligase TRIM63 (Trim63) (Rattus norvegicus (Rat)).